The following is a 228-amino-acid chain: Probable septum site-determining protein MinC (228 aa).

This sequence belongs to the MinC family. Interacts with MinD and FtsZ.

Its function is as follows. Cell division inhibitor that blocks the formation of polar Z ring septums. Rapidly oscillates between the poles of the cell to destabilize FtsZ filaments that have formed before they mature into polar Z rings. Prevents FtsZ polymerization. The sequence is that of Probable septum site-determining protein MinC from Yersinia pseudotuberculosis serotype O:1b (strain IP 31758).